The sequence spans 178 residues: Inner membrane-spanning protein YciB (178 aa).

Transmembrane regions (helical) follow at residues isoleucine 22 to phenylalanine 42, alanine 50 to serine 70, leucine 72 to serine 92, methionine 121 to leucine 141, and phenylalanine 149 to isoleucine 169.

It belongs to the YciB family.

Its subcellular location is the cell inner membrane. Functionally, plays a role in cell envelope biogenesis, maintenance of cell envelope integrity and membrane homeostasis. The polypeptide is Inner membrane-spanning protein YciB (Photorhabdus laumondii subsp. laumondii (strain DSM 15139 / CIP 105565 / TT01) (Photorhabdus luminescens subsp. laumondii)).